Here is an 859-residue protein sequence, read N- to C-terminus: Homeobox-leucine zipper protein HOX32 (859 aa).

Residues 7 to 31 form a disordered region; it reads AAVHGVGRQDRSSPGGGGAPQVDTG. The homeobox DNA-binding region spans 29–92; it reads DTGKYVRYTP…NRRCREKQRK (64 aa). Positions 100–129 form a coiled coil; sequence VNRKLTAMNKLLMEENDRLQKQVSRLVYEN. Over residues 146–164 the composition is skewed to polar residues; it reads TSCESVVTSGQHHQQQNPA. Positions 146-172 are disordered; the sequence is TSCESVVTSGQHHQQQNPAATRPQRDA. Residues 171–393 form the START domain; it reads DANNPAGLLA…LRHIRQIAHE (223 aa).

This sequence belongs to the HD-ZIP homeobox family. Class III subfamily. Expressed in seedlings, roots, stems, leaf sheaths and blades and panicles.

The protein localises to the nucleus. Probable transcription factor. This chain is Homeobox-leucine zipper protein HOX32 (HOX32), found in Oryza sativa subsp. indica (Rice).